Here is a 1845-residue protein sequence, read N- to C-terminus: Proteasome activator complex subunit 4 (1845 aa).

The span at 1–13 shows a compositional bias: basic and acidic residues; that stretch reads MEPAERAGGRDPL. A disordered region spans residues 1–26; the sequence is MEPAERAGGRDPLEPGGRPGPDPQGF. 2 HEAT repeats span residues 475 to 519 and 1000 to 1039; these read PEGP…LVDC and NFCCRDIIPLVLGFLRPDRQDVTQQQFKGALYCLLGNHSG. At Ser1123 the chain carries Phosphoserine. 2 HEAT repeats span residues 1181–1219 and 1356–1394; these read RVLPLRAIRFFVENLNHDAIVVRKMAISAVAGILKQLKR and DAFLPVLKPHLERLVADSHESTQRCVAEIIAGLIRGSKH. Ser1616 carries the post-translational modification Phosphoserine. HEAT repeat units lie at residues 1638–1676 and 1682–1720; these read PHQVPLVLQVLNQTARSSSWHARYTVLTYLQTMVFYNLF and EDAVKDIRWLVISLLEDEQLEVREMAATTLSGLLQCNFL. The interval 1652 to 1740 is bromodomain-like (BRDL); that stretch reads ARSSSWHARY…EQLCKTKLPK (89 aa).

The protein belongs to the BLM10 family. In terms of assembly, homodimer. Component of the spermatoproteasome, a form of the proteasome specifically found in testis. Interacts with the 20S and 26S proteasomes. In terms of processing, phosphorylated.

It is found in the cytoplasm. The protein resides in the cytosol. Its subcellular location is the nucleus. The protein localises to the nucleus speckle. Associated component of the proteasome that specifically recognizes acetylated histones and promotes ATP- and ubiquitin-independent degradation of core histones during spermatogenesis and DNA damage response. Recognizes and binds acetylated histones via its bromodomain-like (BRDL) region and activates the proteasome by opening the gated channel for substrate entry. Binds to the core proteasome via its C-terminus, which occupies the same binding sites as the proteasomal ATPases, opening the closed structure of the proteasome via an active gating mechanism. Component of the spermatoproteasome, a form of the proteasome specifically found in testis: binds to acetylated histones and promotes degradation of histones, thereby participating actively to the exchange of histones during spermatogenesis. Also involved in DNA damage response in somatic cells, by promoting degradation of histones following DNA double-strand breaks. The chain is Proteasome activator complex subunit 4 (PSME4) from Bos taurus (Bovine).